Reading from the N-terminus, the 522-residue chain is Lysine--tRNA ligase (522 aa).

Positions 44–52 (PSGLPHIGT) match the 'HIGH' region motif. The 'KMSKS' region signature appears at 290–294 (KISKS). Residue Lys-293 participates in ATP binding.

This sequence belongs to the class-I aminoacyl-tRNA synthetase family.

The protein localises to the cytoplasm. The catalysed reaction is tRNA(Lys) + L-lysine + ATP = L-lysyl-tRNA(Lys) + AMP + diphosphate. The sequence is that of Lysine--tRNA ligase from Rickettsia bellii (strain OSU 85-389).